The chain runs to 115 residues: Small nuclear ribonucleoprotein Sm D2 (115 aa).

The 86-residue stretch at 30–115 (LSVLQQAVKN…VVLVVRIPSA (86 aa)) folds into the Sm domain.

It belongs to the snRNP core protein family. In terms of assembly, belongs to the 40S cdc5-associated complex (or cwf complex), a spliceosome sub-complex reminiscent of a late-stage spliceosome composed of the U2, U5 and U6 snRNAs and at least brr2, cdc5, cwf2/prp3, cwf3/syf1, cwf4/syf3, cwf5/ecm2, spp42/cwf6, cwf7/spf27, cwf8, cwf9, cwf10, cwf11, cwf12, prp45/cwf13, cwf14, cwf15, cwf16, cwf17, cwf18, cwf19, cwf20, cwf21, cwf22, cwf23, cwf24, cwf25, cwf26, cyp7/cwf27, cwf28, cwf29/ist3, lea1, msl1, prp5/cwf1, prp10, prp12/sap130, prp17, prp22, sap61, sap62, sap114, sap145, slu7, smb1, smd1, smd3, smf1, smg1 and syf2.

It is found in the nucleus. It localises to the cytoplasm. Its subcellular location is the cytosol. In terms of biological role, plays a role in pre-mRNA splicing as a core component of the spliceosomal U1, U2, U4 and U5 small nuclear ribonucleoproteins (snRNPs), the building blocks of the spliceosome. The chain is Small nuclear ribonucleoprotein Sm D2 (smd2) from Schizosaccharomyces pombe (strain 972 / ATCC 24843) (Fission yeast).